The chain runs to 196 residues: Phosphoheptose isomerase (196 aa).

One can recognise an SIS domain in the interval 34–193; that stretch reads LIETFKIGNK…EQGLFGIFAG (160 aa). 49–51 serves as a coordination point for substrate; the sequence is NGG. Positions 58 and 62 each coordinate Zn(2+). Residues glutamate 62, 91–92, 117–119, serine 122, and glutamine 169 each bind substrate; these read ND and STS. Residues glutamine 169 and histidine 177 each coordinate Zn(2+).

The protein belongs to the SIS family. GmhA subfamily. As to quaternary structure, homotetramer. Zn(2+) serves as cofactor.

Its subcellular location is the cytoplasm. It carries out the reaction 2 D-sedoheptulose 7-phosphate = D-glycero-alpha-D-manno-heptose 7-phosphate + D-glycero-beta-D-manno-heptose 7-phosphate. It participates in carbohydrate biosynthesis; D-glycero-D-manno-heptose 7-phosphate biosynthesis; D-glycero-alpha-D-manno-heptose 7-phosphate and D-glycero-beta-D-manno-heptose 7-phosphate from sedoheptulose 7-phosphate: step 1/1. Catalyzes the isomerization of sedoheptulose 7-phosphate in D-glycero-D-manno-heptose 7-phosphate. The sequence is that of Phosphoheptose isomerase from Trichlorobacter lovleyi (strain ATCC BAA-1151 / DSM 17278 / SZ) (Geobacter lovleyi).